Consider the following 168-residue polypeptide: Large ribosomal subunit protein uL5 (168 aa).

Belongs to the universal ribosomal protein uL5 family. As to quaternary structure, part of the 50S ribosomal subunit; contacts the 5S rRNA and probably tRNA. Forms a bridge to the 30S subunit in the 70S ribosome.

In terms of biological role, this is one of the proteins that bind and probably mediate the attachment of the 5S RNA into the large ribosomal subunit, where it forms part of the central protuberance. In the 70S ribosome it contacts protein S13 of the 30S subunit (bridge B1b), connecting the 2 subunits; this bridge is implicated in subunit movement. May contact the P site tRNA; the 5S rRNA and some of its associated proteins might help stabilize positioning of ribosome-bound tRNAs. In Methanosphaera stadtmanae (strain ATCC 43021 / DSM 3091 / JCM 11832 / MCB-3), this protein is Large ribosomal subunit protein uL5.